A 215-amino-acid polypeptide reads, in one-letter code: MKPFVIAIDGPAASGKGTLARKIAAHYHLHHLDTGLTYRGVAYALLQHNLALDDEKNAITYAKELDFNTLNLAFLSSHELGEAASKIALNPTIRKILVEKQRNFAKTLPGSVLDGRDIGTIVCPDADIKFYILANVQTRAKRRYQEILKKGGQANYHEILNDLEQRDSRDITRKESPLKPAENAHLLDTSELSIEATFAIACSFIDPIIKMHIIG.

Position 10 to 18 (10 to 18 (GPAASGKGT)) interacts with ATP.

This sequence belongs to the cytidylate kinase family. Type 1 subfamily.

It localises to the cytoplasm. It catalyses the reaction CMP + ATP = CDP + ADP. The catalysed reaction is dCMP + ATP = dCDP + ADP. The sequence is that of Cytidylate kinase from Bartonella tribocorum (strain CIP 105476 / IBS 506).